The sequence spans 1567 residues: ABC multidrug transporter MDR1 (1567 aa).

The span at 1–11 (MASQPPQPPSG) shows a compositional bias: pro residues. Residues 1-37 (MASQPPQPPSGQPDTQYEEYQSEVITETTNRPTPAAD) form a disordered region. The segment covering 22 to 32 (SEVITETTNRP) has biased composition (polar residues). N-linked (GlcNAc...) asparagine glycans are attached at residues Asn-149, Asn-157, and Asn-356. Residues 167-432 (VQYQDTFLSP…FEEMGWYCPP (266 aa)) enclose the ABC transporter 1 domain. 6 helical membrane-spanning segments follow: residues 543 to 563 (STIA…SLFF), 571 to 591 (GFFA…LMSI), 636 to 656 (IPIK…LGGL), 661 to 681 (AKFF…SAIF), 691 to 711 (IPQA…YTGF), and 798 to 818 (LGIL…VSEL). N-linked (GlcNAc...) asparagine glycosylation is found at Asn-819, Asn-895, and Asn-912. Residues 891 to 1134 (FTWRNVTYDI…LLNYFETHGA (244 aa)) enclose the ABC transporter 2 domain. 927–934 (GVSGAGKT) is a binding site for ATP. Residues 1172–1202 (ESRHVQQELDRIQSETSKRNEGHGQSAEKEP) form a disordered region. Residues 1231-1251 (IWGKLLLGLTSALFIGFSFFL) form a helical membrane-spanning segment. Asn-1253 is a glycosylation site (N-linked (GlcNAc...) asparagine). Helical transmembrane passes span 1257–1277 (AGLQ…SSLV), 1305–1325 (VFLL…GIIA), 1345–1365 (ILLL…QMII), 1372–1392 (ETAG…NGVL), and 1498–1518 (GIGW…YYLI).

The protein belongs to the ABC transporter superfamily. ABCG family. PDR (TC 3.A.1.205) subfamily.

Its subcellular location is the cell membrane. It carries out the reaction voriconazole(in) + ATP + H2O = voriconazole(out) + ADP + phosphate + H(+). The catalysed reaction is fluconazole(in) + ATP + H2O = fluconazole(out) + ADP + phosphate + H(+). The enzyme catalyses (R)-miconazole(in) + ATP + H2O = (R)-miconazole(out) + ADP + phosphate + H(+). It catalyses the reaction (S)-miconazole(in) + ATP + H2O = (S)-miconazole(out) + ADP + phosphate + H(+). Functionally, pleiotropic ABC efflux transporter that may be involved in the modulation susceptibility to a wide range of unrelated cytotoxic compounds. The chain is ABC multidrug transporter MDR1 from Trichophyton tonsurans (strain CBS 112818) (Scalp ringworm fungus).